Here is a 332-residue protein sequence, read N- to C-terminus: Glyceraldehyde-3-phosphate dehydrogenase 2 (332 aa).

Residues 11–12, D32, and R77 each bind NAD(+); that span reads RI. D-glyceraldehyde 3-phosphate is bound by residues 148 to 150, T179, 208 to 209, and R231; these read SCT and TG. C149 acts as the Nucleophile in catalysis. N313 lines the NAD(+) pocket.

The protein belongs to the glyceraldehyde-3-phosphate dehydrogenase family. Homotetramer.

Its subcellular location is the cytoplasm. It catalyses the reaction D-glyceraldehyde 3-phosphate + phosphate + NAD(+) = (2R)-3-phospho-glyceroyl phosphate + NADH + H(+). Its pathway is carbohydrate degradation; glycolysis; pyruvate from D-glyceraldehyde 3-phosphate: step 1/5. The polypeptide is Glyceraldehyde-3-phosphate dehydrogenase 2 (Gapdh2) (Drosophila pseudoobscura pseudoobscura (Fruit fly)).